A 4069-amino-acid polypeptide reads, in one-letter code: Cardiomyopathy-associated protein 5 (4069 aa).

23 disordered regions span residues 1–177 (MASR…SQVL), 341–387 (TVPS…DTPA), 442–525 (GLAA…EDSN), 538–558 (ESPLVSEKPFPPHMSPEVEHK), 597–705 (EYSV…VPSL), 732–793 (PSEE…RFTP), 844–872 (SSPDLVVASEHSFPPHTTEMTSECQAPPL), 890–948 (LERY…FSPD), 979–1009 (TSPSEHTILSDEDTEEAELFSPDSASQVSIP), 1041–1097 (ADEE…PEIP), 1160–1179 (VKEETKPASPHSVLPDSVPA), 1205–1237 (RKEEIVPDSQEATAHVSQDQKMEPQPPNVPESE), 1540–1575 (KETELPSSQNVSPASKHIIPKGKDEETASSSPELEN), 1594–1742 (PAVE…EEFQ), 1757–1809 (HPAD…ITEP), 1892–1988 (ENWM…VKLA), 2064–2175 (TISS…KKGI), 2187–2259 (FGSS…SGDG), 2385–2412 (PQQPKSASSNFASKNITKESEKPESIIL), 2425–2463 (SEDRLKKEMQNPTSLKISEEETKLRSVSPTEKKDNLENR), 2494–2527 (TQITLGSRSTELKESKADAMPQHFYQNEDYNERP), 2653–2706 (QEGN…VGTQ), and 2750–2862 (SSRD…SDVP). Acidic residues predominate over residues 27 to 47 (ETEEESEGEEDETAAESEEEP). Positions 48 to 62 (DSRLSDQDEEGKIKQ) are enriched in basic and acidic residues. Polar residues predominate over residues 84–119 (TWETNSSRSSTPWASEESQTSGVCSREGSTVNSPPG). A compositionally biased stretch (basic residues) spans 130-153 (KVRKRTHKSKHGSPSLRRKGNRKR). Ser-155 carries the phosphoserine modification. 2 stretches are compositionally biased toward polar residues: residues 156-177 (FESQDVPTNKKGSPLTSASQVL) and 341-350 (TVPSYSSSGR). A compositionally biased stretch (low complexity) spans 489–499 (LEPSISLSEPL). Positions 500 to 510 (MLEEPEKEEIE) are enriched in acidic residues. Ser-631 bears the Phosphoserine mark. The span at 640–659 (AYSPAAAPTSESSLSPSTTE) shows a compositional bias: low complexity. Composition is skewed to polar residues over residues 664–673 (NQSPLFSTVT), 692–701 (PDSTSASEYS), and 752–775 (PSLSPSTTEKTSECQSPLPSTATS). Polar residues predominate over residues 1049-1063 (TAATPVSEQFSSSQK). The span at 1085 to 1094 (DKSEKAEIKP) shows a compositional bias: basic and acidic residues. Residues 1214 to 1223 (QEATAHVSQD) are compositionally biased toward polar residues. Positions 1621-1630 (EPEKKDKPHQ) are enriched in basic and acidic residues. Polar residues predominate over residues 1639–1662 (SEFSSDLGRQSGSIGTKQAKSPIT). 3 stretches are compositionally biased toward basic and acidic residues: residues 1668–1687 (VLEKGPAELRSREGKEENRE), 1704–1714 (LREESQNEEIK), and 1786–1795 (ILDKLSEETG). A compositionally biased stretch (polar residues) spans 1796 to 1808 (HPNSSQVLQSITE). The segment covering 1935–1955 (SKDHTCEVRKQVLPHSAEESH) has biased composition (basic and acidic residues). Positions 1956–1980 (LSSQEAVSALDTSSGNTETLSSKSY) are enriched in polar residues. The segment covering 2085-2124 (NEKEAHRSTPPFPEEKPLEESKMVQSKVIDDADEGKKPSP) has biased composition (basic and acidic residues). The segment covering 2145 to 2155 (SPESPEVTQNP) has biased composition (polar residues). 2 stretches are compositionally biased toward basic and acidic residues: residues 2162–2172 (AKPDLPEEKGK) and 2232–2250 (KPADHSLSEVKLKTADEPR). Over residues 2387 to 2399 (QPKSASSNFASKN) the composition is skewed to polar residues. Phosphoserine is present on Ser-2404. Residues 2441 to 2461 (ISEEETKLRSVSPTEKKDNLE) show a composition bias toward basic and acidic residues. Composition is skewed to basic and acidic residues over residues 2661–2681 (KSSRDMPDHSEEKEQFRESEL), 2750–2769 (SSRDMPDHSEEKEQFKESEL), and 2777–2804 (ITKESMKEGFPSKESERTLARPFDETKS). Ser-2813 is modified (phosphoserine). Positions 2830 to 2847 (AVKKKEMPRSELTPERHT) are enriched in basic and acidic residues. The stretch at 2964-2988 (SIDQEESEQMQDKLEYLEEKASFKT) forms a coiled coil. A compositionally biased stretch (basic and acidic residues) spans 3015-3031 (PLKENKQKETHKTKEEI). 5 disordered regions span residues 3015 to 3037 (PLKENKQKETHKTKEEISTDSET), 3119 to 3156 (EKGHNILSHPETQSQNSADRNVSKDTKRDVDSKSPGMP), 3204 to 3231 (KKKEEETASEGDSVNSEASFPSRNSDTD), 3386 to 3421 (SGATHVQETSLEEPKILVPPEPSEERLRNSPVQDEY), and 3465 to 3495 (EFASEAEQSTPAEQKELGSERKEEDQLSSEV). Positions 3052–3365 (YFEKYTLIDY…GSHGNEVGNA (314 aa)) are required for RYR2 clustering. Over residues 3128–3138 (PETQSQNSADR) the composition is skewed to polar residues. Over residues 3139–3150 (NVSKDTKRDVDS) the composition is skewed to basic and acidic residues. Positions 3213 to 3227 (EGDSVNSEASFPSRN) are enriched in polar residues. Ser-3228 is modified (phosphoserine). Over residues 3477–3489 (EQKELGSERKEED) the composition is skewed to basic and acidic residues. Positions 3517–3544 (KCPISATDKVFGTHKDHEVSTLDTAISA) are amphipathic helix H1. Residues 3544-3653 (AVKVQLAEFL…REAEELDEAV (110 aa)) adopt a coiled-coil conformation. The B-box coiled-coil; BBC stretch occupies residues 3545 to 3672 (VKVQLAEFLE…ERLLSAMEST (128 aa)). Residues 3631-3648 (SMDTAKDTLETIVREAEE) are amphipathic helix H2. Fibronectin type-III domains lie at 3704-3805 (VPQP…TAPS) and 3806-3898 (TPVI…TRGT). The tract at residues 3751-3767 (EVNELVEEYRLTVKESY) is amphipathic helix H3. The B30.2/SPRY domain maps to 3880 to 4065 (NAFGTSEQSE…LHLGIEPPDS (186 aa)).

As to quaternary structure, interacts with PRKAR2A. Interacts with ACTN2 and DTNBP1/dysbindin. Interacts with DES. Interacts with DMD/dystrophin. Interacts with the calcineurin catalytic subunit PPP3CA. Interacts with TTN. Interacts with CAPN3; this interaction, which results in CMYA5 proteolysis, may protect CAPN3 from autolysis. Interacts with FSD2. Identified in a complex composed of FSD2, CMYA5 and RYR2. Post-translationally, phosphorylated by PKA. Expressed in skeletal muscle; at a strong level and in heart.

The protein resides in the nucleus. It is found in the sarcoplasmic reticulum. It localises to the cytoplasm. The protein localises to the perinuclear region. Its subcellular location is the myofibril. The protein resides in the sarcomere. It is found in the m line. In terms of biological role, may serve as an anchoring protein that mediates the subcellular compartmentation of protein kinase A (PKA) via binding to PRKAR2A. May function as a repressor of calcineurin-mediated transcriptional activity. May attenuate calcineurin ability to induce slow-fiber gene program in muscle and may negatively modulate skeletal muscle regeneration. Plays a role in the assembly of ryanodine receptor (RYR2) clusters in striated muscle. In Homo sapiens (Human), this protein is Cardiomyopathy-associated protein 5 (CMYA5).